The following is an 864-amino-acid chain: N-alpha-acetyltransferase 16, NatA auxiliary subunit (864 aa).

TPR repeat units lie at residues 46-79, 80-113, 148-184, 224-257, 374-407, 409-441, and 485-518; these read GETLAMKGLTLNCLGKKEEAYEFVRKGLRNDVKS, HVCWHVYGLLQRSDKKYDEAIKCYRNALKLDKDN, RASWIGYAIAYHLLKDYDMALKLLEEFRQTQQVPPNK, LLVEEIKGEILLKLGRLKEASEVFKNLIDRNAEN, LWVQYFLAQHFDKLGQYSLALDYINAAIASTPTL, ELFYMKAKIYKHIGNLKEAAKWMDEAQSLDTAD, and MWFQTECISAYQRLGRYGDALKKCHEVERHFFEI. A disordered region spans residues 603-638; sequence QKKAKLEEERKHAERERQQKNQKKKRDEEEEEASGL. Residues 606 to 621 show a composition bias toward basic and acidic residues; the sequence is AKLEEERKHAERERQQ.

As to quaternary structure, component of the N-terminal acetyltransferase A (NatA) complex composed of NAA10 and NAA16.

In terms of biological role, auxillary subunit of the N-terminal acetyltransferase A (NatA) complex which displays alpha (N-terminal) acetyltransferase activity. This chain is N-alpha-acetyltransferase 16, NatA auxiliary subunit (NAA16), found in Homo sapiens (Human).